A 559-amino-acid chain; its full sequence is Urocanate hydratase (559 aa).

NAD(+)-binding positions include 53-54 (GG), Gln131, 177-179 (GMG), Glu197, Arg202, 243-244 (NA), 264-268 (QTSAH), 274-275 (YL), and Tyr323. Cys411 is an active-site residue. An NAD(+)-binding site is contributed by Gly493.

The protein belongs to the urocanase family. It depends on NAD(+) as a cofactor.

The protein resides in the cytoplasm. The catalysed reaction is 4-imidazolone-5-propanoate = trans-urocanate + H2O. It functions in the pathway amino-acid degradation; L-histidine degradation into L-glutamate; N-formimidoyl-L-glutamate from L-histidine: step 2/3. Its function is as follows. Catalyzes the conversion of urocanate to 4-imidazolone-5-propionate. This Pseudomonas aeruginosa (strain ATCC 15692 / DSM 22644 / CIP 104116 / JCM 14847 / LMG 12228 / 1C / PRS 101 / PAO1) protein is Urocanate hydratase.